We begin with the raw amino-acid sequence, 1409 residues long: Receptor-type tyrosine-protein phosphatase (1409 aa).

An N-terminal signal peptide occupies residues 1 to 22 (MRINRWIWWATVILLYLRTGLA). Residues 23–712 (ADFFRSSEEN…LLDTESSSSG (690 aa)) are Extracellular-facing. A disordered region spans residues 32-53 (NDRKSSDDLDNFNSTKIEPDKP). One can recognise an Ig-like C2-type domain in the interval 159-267 (PTKCDKRDLA…TASASDLDVT (109 aa)). Cys189 and Cys255 are joined by a disulfide. Fibronectin type-III domains lie at 276 to 366 (APRQ…TKQK) and 372 to 502 (KEED…AQPD). The chain crosses the membrane as a helical span at residues 713 to 733 (FGIFMKIILPFLLFLAFATGV). The Cytoplasmic segment spans residues 734-1409 (TMFFVNRKGH…LADYISKTYR (676 aa)). Tyrosine-protein phosphatase domains follow at residues 793 to 1072 (FAQE…LAEW) and 1135 to 1403 (LEEE…LADY). Catalysis depends on phosphocysteine intermediate residues Cys1013 and Cys1344.

This sequence belongs to the protein-tyrosine phosphatase family. Receptor class 2A subfamily. In terms of tissue distribution, expressed in muscles, hypodermis and a subset of neurons. Expressed in the AVA neurons, with high expression in the anterior half of the preanal ganglion where AVA neurons contact the PHB neurons.

The protein resides in the cell membrane. The protein localises to the synapse. It carries out the reaction O-phospho-L-tyrosyl-[protein] + H2O = L-tyrosyl-[protein] + phosphate. Functionally, possesses an intrinsic protein tyrosine phosphatase (PTPase) activity. Regulates egl-15 activity which is required for hypodermis-mediated fluid homeostasis and protein degradation in muscle. During the formation of neuromuscular junctions at the larval stage, negatively regulates membrane protrusion from body wall muscles. Plays a role in nicotinic acetylcholine receptor (nAChR)-mediated sensitivity to nicotine. Regulates synaptic levels of nAchR subunit lev-1 in the nerve cord. Promotes the outgrowth of the quaternary dendritic branches of the PVD sensory neurons. In parallel to the sax-7/mnr-1 pathway, also controls the extension of the PVD primary branches. Acts in the netrin/DCC pathway to mediate the formation of synapses between the AVA interneurons and the PHB sensory neurons. Also required for the formation of synapses between the AVA interneurons and the VA10 motor neurons. This Caenorhabditis elegans protein is Receptor-type tyrosine-protein phosphatase.